Consider the following 663-residue polypeptide: UvrABC system protein B (663 aa).

The Helicase ATP-binding domain maps to 26–414; sequence DGLESGLAKQ…DNVAEQVVRP (389 aa). ATP is bound at residue 39 to 46; that stretch reads GVTGSGKT. A Beta-hairpin motif is present at residues 92-115; that stretch reads YYDYYQPEAYVPASDTFIEKDASI. The 167-residue stretch at 430–596 folds into the Helicase C-terminal domain; sequence QVDDLMSEIR…GINKSVEDIL (167 aa). The UVR domain occupies 624 to 659; that stretch reads AKQINALEKQMYAHAQNMEFELAAKIRDEYLLLKEQ.

It belongs to the UvrB family. In terms of assembly, forms a heterotetramer with UvrA during the search for lesions. Interacts with UvrC in an incision complex.

It is found in the cytoplasm. In terms of biological role, the UvrABC repair system catalyzes the recognition and processing of DNA lesions. A damage recognition complex composed of 2 UvrA and 2 UvrB subunits scans DNA for abnormalities. Upon binding of the UvrA(2)B(2) complex to a putative damaged site, the DNA wraps around one UvrB monomer. DNA wrap is dependent on ATP binding by UvrB and probably causes local melting of the DNA helix, facilitating insertion of UvrB beta-hairpin between the DNA strands. Then UvrB probes one DNA strand for the presence of a lesion. If a lesion is found the UvrA subunits dissociate and the UvrB-DNA preincision complex is formed. This complex is subsequently bound by UvrC and the second UvrB is released. If no lesion is found, the DNA wraps around the other UvrB subunit that will check the other stand for damage. The sequence is that of UvrABC system protein B from Legionella pneumophila (strain Lens).